Consider the following 252-residue polypeptide: T-box transcription factor mls-1 (252 aa).

Residues Leu-40–Glu-210 constitute a DNA-binding region (T-box).

May interact with unc-37.

Its subcellular location is the nucleus. Functionally, probable transcription factor required for the cell fate specification of non-striated uterine muscle precursor cells. Furthermore, may function with the transcriptional corepressor unc-37. The chain is T-box transcription factor mls-1 from Caenorhabditis elegans.